We begin with the raw amino-acid sequence, 280 residues long: Succinate dehydrogenase [ubiquinone] iron-sulfur subunit, mitochondrial (280 aa).

Residues 1-28 (MAAVVALSLRRRLPATTLGGACLQASRG) constitute a mitochondrion transit peptide. Residues 40-133 (KKFAIYRWDP…VSKIYPLPHM (94 aa)) form the 2Fe-2S ferredoxin-type domain. N6-acetyllysine occurs at positions 51 and 55. Cys93, Cys98, Cys101, and Cys113 together coordinate [2Fe-2S] cluster. The segment at 146-218 (FYAQYKSIEP…PAVLMQAYRW (73 aa)) is interaction with SDHAF1. The 4Fe-4S ferredoxin-type domain occupies 176–206 (EREKLDGLYECILCACCSTSCPSYWWNGDKY). Residues Cys186, Cys189, and Cys192 each contribute to the [4Fe-4S] cluster site. Residue Cys196 coordinates [3Fe-4S] cluster. Trp201 contributes to the a ubiquinone binding site. [3Fe-4S] cluster-binding residues include Cys243 and Cys249. A [4Fe-4S] cluster-binding site is contributed by Cys253.

It belongs to the succinate dehydrogenase/fumarate reductase iron-sulfur protein family. Component of complex II composed of four subunits: the flavoprotein (FP) SDHA, iron-sulfur protein (IP) SDHB, and a cytochrome b560 composed of SDHC and SDHD. Interacts with SDHAF1; the interaction is required for iron-sulfur cluster incorporation into SDHB. In terms of assembly, (Microbial infection) Interacts with JC virus small t antigen. Requires [2Fe-2S] cluster as cofactor. [3Fe-4S] cluster is required as a cofactor. [4Fe-4S] cluster serves as cofactor.

The protein localises to the mitochondrion inner membrane. The enzyme catalyses a quinone + succinate = fumarate + a quinol. It catalyses the reaction (R)-malate + a quinone = enol-oxaloacetate + a quinol. The catalysed reaction is (S)-malate + a quinone = enol-oxaloacetate + a quinol. The protein operates within carbohydrate metabolism; tricarboxylic acid cycle; fumarate from succinate (eukaryal route): step 1/1. With respect to regulation, enol-oxaloacetate inhibits the succinate dehydrogenase activity. Iron-sulfur protein (IP) subunit of the succinate dehydrogenase complex (mitochondrial respiratory chain complex II), responsible for transferring electrons from succinate to ubiquinone (coenzyme Q). SDH also oxidizes malate to the non-canonical enol form of oxaloacetate, enol-oxaloacetate. Enol-oxaloacetate, which is a potent inhibitor of the succinate dehydrogenase activity, is further isomerized into keto-oxaloacetate. The protein is Succinate dehydrogenase [ubiquinone] iron-sulfur subunit, mitochondrial (SDHB) of Homo sapiens (Human).